We begin with the raw amino-acid sequence, 693 residues long: Elongation factor G (693 aa).

Residues 8–282 (EKTRNIGIMA…AVIDYLPSPL (275 aa)) form the tr-type G domain. Residues 17-24 (AHVDAGKT), 81-85 (DTPGH), and 135-138 (NKMD) contribute to the GTP site.

Belongs to the TRAFAC class translation factor GTPase superfamily. Classic translation factor GTPase family. EF-G/EF-2 subfamily.

The protein localises to the cytoplasm. Its function is as follows. Catalyzes the GTP-dependent ribosomal translocation step during translation elongation. During this step, the ribosome changes from the pre-translocational (PRE) to the post-translocational (POST) state as the newly formed A-site-bound peptidyl-tRNA and P-site-bound deacylated tRNA move to the P and E sites, respectively. Catalyzes the coordinated movement of the two tRNA molecules, the mRNA and conformational changes in the ribosome. This chain is Elongation factor G, found in Streptococcus pneumoniae (strain CGSP14).